We begin with the raw amino-acid sequence, 95 residues long: Large ribosomal subunit protein eL37z (95 aa).

Zn(2+)-binding residues include C19, C22, C34, and C37. The C4-type zinc-finger motif lies at 19 to 37 (CVRCGRRSFHIQKSRCSAC).

It belongs to the eukaryotic ribosomal protein eL37 family. Zn(2+) serves as cofactor.

Its function is as follows. Binds to the 23S rRNA. This chain is Large ribosomal subunit protein eL37z (RPL37A), found in Arabidopsis thaliana (Mouse-ear cress).